The primary structure comprises 378 residues: Putative methyltransferase spot-1 (378 aa).

Belongs to the class IV-like SAM-binding methyltransferase superfamily.

It localises to the cytoplasm. The protein resides in the cytoskeleton. Its subcellular location is the spindle. The protein localises to the chromosome. It is found in the centromere. It localises to the kinetochore. The protein resides in the microtubule organizing center. Its subcellular location is the centrosome. Required for association of the centrosomes with the poles of the bipolar mitotic spindle during metaphase. This is Putative methyltransferase spot-1 from Caenorhabditis elegans.